Consider the following 273-residue polypeptide: NAD-dependent protein deacylase (273 aa).

The Deacetylase sirtuin-type domain occupies 20–272 (RERLRQRIFF…PEFVEKLLEG (253 aa)). Residue 48–67 (GAGISAESGIRTFRAADGLW) participates in NAD(+) binding. Substrate is bound by residues Tyr-92 and Arg-95. 129 to 132 (QNID) contributes to the NAD(+) binding site. The active-site Proton acceptor is the His-147. Zn(2+) is bound by residues Cys-155 and Cys-174. Residues 214-216 (GTS), 240-242 (NLE), and Ala-258 contribute to the NAD(+) site.

This sequence belongs to the sirtuin family. Class III subfamily. Zn(2+) is required as a cofactor.

The protein localises to the cytoplasm. The catalysed reaction is N(6)-acetyl-L-lysyl-[protein] + NAD(+) + H2O = 2''-O-acetyl-ADP-D-ribose + nicotinamide + L-lysyl-[protein]. It carries out the reaction N(6)-succinyl-L-lysyl-[protein] + NAD(+) + H2O = 2''-O-succinyl-ADP-D-ribose + nicotinamide + L-lysyl-[protein]. It catalyses the reaction N(6)-(2-hydroxyisobutanoyl)-L-lysyl-[protein] + NAD(+) + H2O = 2''-O-(2-hydroxyisobutanoyl)-ADP-D-ribose + nicotinamide + L-lysyl-[protein]. In terms of biological role, NAD-dependent lysine deacetylase that specifically removes acetyl groups on target proteins. Also acts as a protein-lysine deacylase by mediating protein desuccinylation and de-2-hydroxyisobutyrylation. Modulates the activities of several proteins which are inactive in their acylated form. The sequence is that of NAD-dependent protein deacylase from Shigella flexneri.